A 159-amino-acid chain; its full sequence is Phosphopantetheine adenylyltransferase (159 aa).

Residue Ser-9 coordinates substrate. Residues 9–10 and His-17 each bind ATP; that span reads SF. Substrate contacts are provided by Lys-41, Leu-73, and Lys-87. ATP is bound by residues 88-90, Glu-98, and 123-129; these read GLR and NIHISSS.

Belongs to the bacterial CoaD family. In terms of assembly, homohexamer. Mg(2+) is required as a cofactor.

It localises to the cytoplasm. It carries out the reaction (R)-4'-phosphopantetheine + ATP + H(+) = 3'-dephospho-CoA + diphosphate. Its pathway is cofactor biosynthesis; coenzyme A biosynthesis; CoA from (R)-pantothenate: step 4/5. Functionally, reversibly transfers an adenylyl group from ATP to 4'-phosphopantetheine, yielding dephospho-CoA (dPCoA) and pyrophosphate. This Clostridium beijerinckii (strain ATCC 51743 / NCIMB 8052) (Clostridium acetobutylicum) protein is Phosphopantetheine adenylyltransferase.